The following is a 397-amino-acid chain: Tryptophan synthase beta chain (397 aa).

K91 bears the N6-(pyridoxal phosphate)lysine mark.

The protein belongs to the TrpB family. In terms of assembly, tetramer of two alpha and two beta chains. Requires pyridoxal 5'-phosphate as cofactor.

It catalyses the reaction (1S,2R)-1-C-(indol-3-yl)glycerol 3-phosphate + L-serine = D-glyceraldehyde 3-phosphate + L-tryptophan + H2O. It participates in amino-acid biosynthesis; L-tryptophan biosynthesis; L-tryptophan from chorismate: step 5/5. Functionally, the beta subunit is responsible for the synthesis of L-tryptophan from indole and L-serine. The chain is Tryptophan synthase beta chain from Bacillus anthracis (strain A0248).